The following is a 485-amino-acid chain: Glutamyl-tRNA(Gln) amidotransferase subunit A (485 aa).

Active-site charge relay system residues include lysine 78 and serine 153. Serine 177 serves as the catalytic Acyl-ester intermediate.

The protein belongs to the amidase family. GatA subfamily. As to quaternary structure, heterotrimer of A, B and C subunits.

It carries out the reaction L-glutamyl-tRNA(Gln) + L-glutamine + ATP + H2O = L-glutaminyl-tRNA(Gln) + L-glutamate + ADP + phosphate + H(+). Its function is as follows. Allows the formation of correctly charged Gln-tRNA(Gln) through the transamidation of misacylated Glu-tRNA(Gln) in organisms which lack glutaminyl-tRNA synthetase. The reaction takes place in the presence of glutamine and ATP through an activated gamma-phospho-Glu-tRNA(Gln). The sequence is that of Glutamyl-tRNA(Gln) amidotransferase subunit A from Pelobacter propionicus (strain DSM 2379 / NBRC 103807 / OttBd1).